A 41-amino-acid chain; its full sequence is Urotensin-1 (41 aa).

At Val-41 the chain carries Valine amide.

It belongs to the sauvagine/corticotropin-releasing factor/urotensin I family.

The protein localises to the secreted. Functionally, urotensin is found in the teleost caudal neurosecretory system. It has a suggested role in osmoregulation and as a corticotropin-releasing factor. In Catostomus commersonii (White sucker), this protein is Urotensin-1.